The primary structure comprises 542 residues: CTP synthase (542 aa).

Residues 1–265 (MARYVFITGG…DSEVLCAFGI (265 aa)) are amidoligase domain. Residue Ser13 participates in CTP binding. Ser13 serves as a coordination point for UTP. Residue 14-19 (SLGKGI) coordinates ATP. Tyr54 contacts L-glutamine. Asp71 lines the ATP pocket. Mg(2+)-binding residues include Asp71 and Glu139. CTP-binding positions include 146–148 (DIE), 186–191 (KTKPTQ), and Lys222. UTP contacts are provided by residues 186–191 (KTKPTQ) and Lys222. The Glutamine amidotransferase type-1 domain occupies 291–541 (TIAVVGKYTG…IEAAVEQSRL (251 aa)). Ala353 contributes to the L-glutamine binding site. Cys380 functions as the Nucleophile; for glutamine hydrolysis in the catalytic mechanism. Residues 381–384 (FGMQ), Glu404, and Arg469 contribute to the L-glutamine site. Catalysis depends on residues His514 and Glu516.

It belongs to the CTP synthase family. As to quaternary structure, homotetramer.

The catalysed reaction is UTP + L-glutamine + ATP + H2O = CTP + L-glutamate + ADP + phosphate + 2 H(+). It carries out the reaction L-glutamine + H2O = L-glutamate + NH4(+). The enzyme catalyses UTP + NH4(+) + ATP = CTP + ADP + phosphate + 2 H(+). The protein operates within pyrimidine metabolism; CTP biosynthesis via de novo pathway; CTP from UDP: step 2/2. Its activity is regulated as follows. Allosterically activated by GTP, when glutamine is the substrate; GTP has no effect on the reaction when ammonia is the substrate. The allosteric effector GTP functions by stabilizing the protein conformation that binds the tetrahedral intermediate(s) formed during glutamine hydrolysis. Inhibited by the product CTP, via allosteric rather than competitive inhibition. Functionally, catalyzes the ATP-dependent amination of UTP to CTP with either L-glutamine or ammonia as the source of nitrogen. Regulates intracellular CTP levels through interactions with the four ribonucleotide triphosphates. This Bartonella tribocorum (strain CIP 105476 / IBS 506) protein is CTP synthase.